Here is a 665-residue protein sequence, read N- to C-terminus: Protein phosphatase 1 regulatory subunit 21 (665 aa).

4 coiled-coil regions span residues 1-84 (MTDL…SESK), 125-206 (LEAQ…RKYQ), 426-477 (ESRE…EAQV), and 586-627 (KRLA…EDQL).

As to quaternary structure, component of the FERRY complex.

The protein localises to the early endosome. In terms of biological role, component of the FERRY complex (Five-subunit Endosomal Rab5 and RNA/ribosome intermediary). The FERRY complex directly interacts with mRNAs and RAB5A, and functions as a RAB5A effector involved in the localization and the distribution of specific mRNAs most likely by mediating their endosomal transport. The complex recruits mRNAs and ribosomes to early endosomes through direct mRNA-interaction. Putative regulator of protein phosphatase 1 (PP1) activity. May play a role in the endosomal sorting process or in endosome maturation pathway. This is Protein phosphatase 1 regulatory subunit 21 (ppp1r21) from Danio rerio (Zebrafish).